We begin with the raw amino-acid sequence, 962 residues long: Protease 3 (962 aa).

Residues 1–23 (MPRSTWFKALLLLVALWAPLSQA) form the signal peptide. Histidine 88 provides a ligand contact to Zn(2+). The active-site Proton acceptor is glutamate 91. Zn(2+) contacts are provided by histidine 92 and glutamate 169.

This sequence belongs to the peptidase M16 family. In terms of assembly, monomer. It depends on Zn(2+) as a cofactor.

The protein resides in the periplasm. It carries out the reaction Preferential cleavage of 16-Tyr-|-Leu-17 and 25-Phe-|-Tyr-26 bonds of oxidized insulin B chain. Also acts on other substrates of Mw less than 7 kDa such as insulin and glucagon.. Endopeptidase that degrades small peptides of less than 7 kDa, such as glucagon and insulin. The chain is Protease 3 (ptrA) from Escherichia coli (strain K12).